Here is a 466-residue protein sequence, read N- to C-terminus: ATP synthase subunit beta (466 aa).

Residue Gly153–Thr160 participates in ATP binding.

The protein belongs to the ATPase alpha/beta chains family. As to quaternary structure, F-type ATPases have 2 components, CF(1) - the catalytic core - and CF(0) - the membrane proton channel. CF(1) has five subunits: alpha(3), beta(3), gamma(1), delta(1), epsilon(1). CF(0) has three main subunits: a(1), b(2) and c(9-12). The alpha and beta chains form an alternating ring which encloses part of the gamma chain. CF(1) is attached to CF(0) by a central stalk formed by the gamma and epsilon chains, while a peripheral stalk is formed by the delta and b chains.

The protein localises to the cell membrane. The catalysed reaction is ATP + H2O + 4 H(+)(in) = ADP + phosphate + 5 H(+)(out). Its function is as follows. Produces ATP from ADP in the presence of a proton gradient across the membrane. The catalytic sites are hosted primarily by the beta subunits. This is ATP synthase subunit beta from Leuconostoc citreum (strain KM20).